Reading from the N-terminus, the 673-residue chain is MAKLETLPVRADPGRDPLLAFAPRPSELGPPDPRLAMGSVGSGVAHAQEFAMKSVGTRTGGGGSQGSFPGPRGSGSGASRERPGRYPSEDKGLANSLYLNGELRGSDHTDVCGNVVGSSGGSSSSGGSDKAPPQYREPSHPPKLLATSGKLDQCSEPLVRPSAFKPVVPKNFHSMQNLCPPQTNGTPEGRQGPGGLKGGLDKSRTMTPAGGSGSGLSDSGRNSLTSLPTYSSSYSQHLAPLSASTSHINRIGTASYGSGSGGSSGGGSGYQDLGTSDSGRASSKSGSSSSMGRPGHLGSGEGGGGGLPFAACSPPSPSALIQELEERLWEKEQEVAALRRSLEQSEAAVAQVLEERQKAWERELAELRQGCSGKLQQVARRAQRAQQGLQLQVLRLQQDKKQLQEEAARLMRQREELEDKVAACQKEQADFLPRIEETKWEVCQKAGEISLLKQQLKDSQADVSQKLSEIVGLRSQLREGRASLREKEEQLLSLRDSFSSKQASLELGEGELPAACLKPALTPVDPAEPQDALATCESDEAKMRRQAGVAAAASLVSVDGEAEAGGESGTRALRREVGRLQAELAAERRARERQGASFAEERRVWLEEKEKVIEYQKQLQLSYVEMYQRNQQLERRLRERGAAGGASTPTPQHGEEKKAWTPSRLERIESTEI.

Disordered regions lie at residues 1–157 (MAKL…CSEP), 172–239 (FHSM…QHLA), and 251–317 (IGTA…PPSP). The span at 79-92 (SRERPGRYPSEDKG) shows a compositional bias: basic and acidic residues. Polar residues predominate over residues 173–186 (HSMQNLCPPQTNGT). Residues 215–235 (GLSDSGRNSLTSLPTYSSSYS) are compositionally biased toward low complexity. A compositionally biased stretch (gly residues) spans 258–269 (SGSGGSSGGGSG). Low complexity predominate over residues 274–294 (GTSDSGRASSKSGSSSSMGRP). Positions 295–307 (GHLGSGEGGGGGL) are enriched in gly residues. Phosphoserine occurs at positions 316 and 318. Coiled coils occupy residues 317–496 (PSAL…SLRD) and 571–639 (RALR…RLRE). Residues 635 to 673 (RRLRERGAAGGASTPTPQHGEEKKAWTPSRLERIESTEI) form a disordered region. Over residues 653-673 (HGEEKKAWTPSRLERIESTEI) the composition is skewed to basic and acidic residues.

This sequence belongs to the LZTS3 family. As to quaternary structure, interacts (via C-terminus) with SHANK3 (via PDZ domain). Interacts (via coiled coil) with SIPA1L1. Can form homooligomers.

Its subcellular location is the synapse. It is found in the postsynaptic density. It localises to the cell projection. The protein localises to the dendritic spine. The protein resides in the dendrite. Its subcellular location is the cytoplasm. It is found in the cytoskeleton. Functionally, may be involved in promoting the maturation of dendritic spines, probably via regulating SIPA1L1 levels at the postsynaptic density of synapses. This is Leucine zipper putative tumor suppressor 3 from Homo sapiens (Human).